A 146-amino-acid chain; its full sequence is Cytochrome c' (146 aa).

A signal peptide spans Met-1–Ala-21. Residues Arg-29, Thr-86, Ala-87, Cys-134, Cys-137, and His-138 each coordinate heme c.

Monomer. Binds 1 heme c group covalently per subunit.

Its function is as follows. Cytochrome c' is the most widely occurring bacterial c-type cytochrome. Cytochromes c' are high-spin proteins and the heme has no sixth ligand. Their exact function is not known. This chain is Cytochrome c' (cycA), found in Rhodopseudomonas palustris (strain ATCC BAA-98 / CGA009).